The sequence spans 1169 residues: DNA-directed RNA polymerase subunit beta (1169 aa).

The protein belongs to the RNA polymerase beta chain family. In terms of assembly, the RNAP catalytic core consists of 2 alpha, 1 beta, 1 beta' and 1 omega subunit. When a sigma factor is associated with the core the holoenzyme is formed, which can initiate transcription. Interacts with RbpA, which partially restores Rif-inhibited transcription.

It carries out the reaction RNA(n) + a ribonucleoside 5'-triphosphate = RNA(n+1) + diphosphate. Functionally, DNA-dependent RNA polymerase catalyzes the transcription of DNA into RNA using the four ribonucleoside triphosphates as substrates. This subunit often mutates to generate rifampicin (Rif) resistance. Interaction with RbpA partially restores Rif-inhibited transcription; once the subunit is Rif-resistant however RbpA no longer stimulates transcription. This is DNA-directed RNA polymerase subunit beta from Mycolicibacterium smegmatis (strain ATCC 700084 / mc(2)155) (Mycobacterium smegmatis).